The chain runs to 333 residues: MNIGQRYGWEFTLAALLIIEILLFGIANSRMLDINILLLSTSDFICIGIVALPLTMVIVSGGIDISFGSTIGLCAISLGVMNQAGIPMAAAIPLTLLVGAICGVINAALILYTGINPLVITLGTLYLFGGSALLLSGISGATGYEGIGGFPQALTDFANLTLFGLPMPLMLFLLCVLICWLFMHRTHSGRNIFLIGQSSKVARYAAIPIARTLYLLYTLTGIASAIAAIVLVSYFGSARSDLGASFLMPAITAVVLGGANIYGGSGSIIGTALAILLIGYLQQGLQMAGVPNQVSSALAGALLIIAVVGRSISLHHHQIRDWIQRWRNQRLSS.

The next 10 helical transmembrane spans lie at 7-27 (YGWE…FGIA), 45-65 (ICIG…GIDI), 70-90 (TIGL…PMAA), 91-111 (AIPL…ALIL), 118-138 (LVIT…LSGI), 162-182 (LFGL…CWLF), 212-232 (TLYL…IVLV), 240-260 (SDLG…GGAN), 261-281 (IYGG…IGYL), and 288-308 (AGVP…IAVV).

Belongs to the binding-protein-dependent transport system permease family. AraH/RbsC subfamily. The complex is composed of two ATP-binding proteins (LsrA), two transmembrane proteins (LsrC and LsrD) and a solute-binding protein (LsrB).

It localises to the cell inner membrane. In terms of biological role, part of the ABC transporter complex LsrABCD involved in autoinducer 2 (AI-2) import. Probably responsible for the translocation of the substrate across the membrane. The sequence is that of Autoinducer 2 import system permease protein LsrD (lsrD) from Photorhabdus luminescens (Xenorhabdus luminescens).